A 341-amino-acid chain; its full sequence is Ketol-acid reductoisomerase (NADP(+)) (341 aa).

The KARI N-terminal Rossmann domain occupies 1–182; sequence MTEMFYDDDA…GGTRAGVIKT (182 aa). NADP(+) is bound by residues 25 to 28, lysine 48, serine 51, serine 53, and 83 to 86; these read YGSQ and DQHQ. Histidine 108 is an active-site residue. Glycine 134 lines the NADP(+) pocket. One can recognise a KARI C-terminal knotted domain in the interval 183–328; the sequence is TFTEETETDL…RELRGLFSWQ (146 aa). Mg(2+) contacts are provided by aspartate 191, glutamate 195, glutamate 227, and glutamate 231. Serine 252 is a binding site for substrate.

This sequence belongs to the ketol-acid reductoisomerase family. The cofactor is Mg(2+).

It carries out the reaction (2R)-2,3-dihydroxy-3-methylbutanoate + NADP(+) = (2S)-2-acetolactate + NADPH + H(+). The enzyme catalyses (2R,3R)-2,3-dihydroxy-3-methylpentanoate + NADP(+) = (S)-2-ethyl-2-hydroxy-3-oxobutanoate + NADPH + H(+). It functions in the pathway amino-acid biosynthesis; L-isoleucine biosynthesis; L-isoleucine from 2-oxobutanoate: step 2/4. The protein operates within amino-acid biosynthesis; L-valine biosynthesis; L-valine from pyruvate: step 2/4. Its function is as follows. Involved in the biosynthesis of branched-chain amino acids (BCAA). Catalyzes an alkyl-migration followed by a ketol-acid reduction of (S)-2-acetolactate (S2AL) to yield (R)-2,3-dihydroxy-isovalerate. In the isomerase reaction, S2AL is rearranged via a Mg-dependent methyl migration to produce 3-hydroxy-3-methyl-2-ketobutyrate (HMKB). In the reductase reaction, this 2-ketoacid undergoes a metal-dependent reduction by NADPH to yield (R)-2,3-dihydroxy-isovalerate. This is Ketol-acid reductoisomerase (NADP(+)) from Arthrobacter sp. (strain FB24).